Consider the following 224-residue polypeptide: 7-cyano-7-deazaguanine synthase (224 aa).

An ATP-binding site is contributed by 12–22 (LSGGLDSSTVT). 4 residues coordinate Zn(2+): Cys-193, Cys-201, Cys-204, and Cys-207.

This sequence belongs to the QueC family. Zn(2+) is required as a cofactor.

The catalysed reaction is 7-carboxy-7-deazaguanine + NH4(+) + ATP = 7-cyano-7-deazaguanine + ADP + phosphate + H2O + H(+). It participates in purine metabolism; 7-cyano-7-deazaguanine biosynthesis. Functionally, catalyzes the ATP-dependent conversion of 7-carboxy-7-deazaguanine (CDG) to 7-cyano-7-deazaguanine (preQ(0)). The sequence is that of 7-cyano-7-deazaguanine synthase from Prochlorococcus marinus (strain MIT 9312).